We begin with the raw amino-acid sequence, 979 residues long: Chromosome partition protein Smc (979 aa).

33 to 40 (PNGSGKSN) is an ATP binding site. Residues 169-400 (SKYKLDKEEA…INILKQQFEN (232 aa)) adopt a coiled-coil conformation. Residues 419–538 (DGYIGLASEL…DNVDNANRIA (120 aa)) form the SMC hinge domain. 2 coiled-coil regions span residues 572–716 (ILNY…HSDS) and 750–818 (SLDL…DKII).

The protein belongs to the SMC family. Homodimer.

The protein localises to the cytoplasm. Its function is as follows. Required for chromosome condensation and partitioning. The chain is Chromosome partition protein Smc from Mesomycoplasma hyorhinis (Mycoplasma hyorhinis).